Consider the following 160-residue polypeptide: Iron-sulfur assembly protein IscA1 (160 aa).

The protein belongs to the HesB/IscA family. As to quaternary structure, tetramer.

The protein localises to the mitochondrion. The protein operates within cofactor biosynthesis; iron-sulfur cluster biosynthesis. Functionally, participates in iron-sulfur cluster formation (ISC) pathway for iron-sulfur (Fe-S) cluster biogenesis. Can bind iron and [4Fe-4S] clusters. May function as an iron chaperone. This chain is Iron-sulfur assembly protein IscA1, found in Plasmodium falciparum (isolate 3D7).